The primary structure comprises 289 residues: (+)-kolavelool synthase (289 aa).

The protein belongs to the diterpene synthase family.

The enzyme catalyses (+)-kolavenyl diphosphate + H2O = (+)-kolavelool + diphosphate. In terms of biological role, involved in the biosynthesis of (+)-O-methylkolavelool. Catalyzes the biosynthesis of (+)-kolavelool from (+)-kolavenyl diphosphate via the release of the diphosphate moiety through the nucleophilic addition of a water molecule. The polypeptide is (+)-kolavelool synthase (Herpetosiphon aurantiacus (strain ATCC 23779 / DSM 785 / 114-95)).